A 306-amino-acid polypeptide reads, in one-letter code: Enoyl-CoA isomerase/hydratase MYCGRDRAFT_76805 (306 aa).

Residues Ala103 to Leu107 and Gly150 contribute to the substrate site.

It belongs to the enoyl-CoA hydratase/isomerase family.

The catalysed reaction is a (3S)-3-hydroxyacyl-CoA = a (2E)-enoyl-CoA + H2O. It catalyses the reaction a 4-saturated-(3S)-3-hydroxyacyl-CoA = a (3E)-enoyl-CoA + H2O. The protein operates within siderophore biosynthesis. Its function is as follows. Enoyl-CoA isomerase/hydratase involved in the biosynthesis of a ferrichrome A-like siderophore which may contribute to organismal virulence. The first step of siderophore biosynthesis is performed by the HMG-CoA synthase (HMGS) MYCGRDRAFT_54740 which catalyzes the generation of HMG-CoA and CoA using acetoacetyl-CoA and acetyl-CoA as substrates. The enoyl-CoA isomerase/hydratase MYCGRDRAFT_76805 then catalyzes the conversion of HMG-CoA to methylglutaconyl-CoA. The acyltransferase MYCGRDRAFT_85486 then fuses methylglutaconyl-CoA with hydroxyornithine to yield methylglutaconyl hydroxyornithine. Methylglutaconyl hydroxyornithine is then available for use by the nonribosomal peptide synthetase NRPS2 to generate the ferrichrome A-like siderophore. This chain is Enoyl-CoA isomerase/hydratase MYCGRDRAFT_76805, found in Zymoseptoria tritici (strain CBS 115943 / IPO323) (Speckled leaf blotch fungus).